Here is a 172-residue protein sequence, read N- to C-terminus: Disulfide bond formation protein B (172 aa).

Over 1 to 11 the chain is Cytoplasmic; the sequence is MNPFRWSFRAQ. The chain crosses the membrane as a helical span at residues 12–28; sequence FLLGFLACAGLLAYAIY. Over 29-46 the chain is Periplasmic; sequence VQLHLGLEPCPLCIFQRI. The cysteines at positions 38 and 41 are disulfide-linked. Residues 47-63 traverse the membrane as a helical segment; the sequence is AFAALAMFFLLGALHGP. The Cytoplasmic portion of the chain corresponds to 64 to 70; it reads RAAAGRK. A helical transmembrane segment spans residues 71-88; that stretch reads VYGVLSFIAAGVGMGIAA. Topologically, residues 89–145 are periplasmic; sequence RHVWVQIRPKDMMSSCGPPLSFLSETMGPFEVFRTVLTGTGDCGNIDWRFLGLSMPM. A disulfide bond links cysteine 104 and cysteine 131. The chain crosses the membrane as a helical span at residues 146–164; it reads WSMVWFVGLALWALYAGFK. Topologically, residues 165–172 are cytoplasmic; that stretch reads ARRSSVHH.

Belongs to the DsbB family.

The protein localises to the cell inner membrane. Required for disulfide bond formation in some periplasmic proteins. Acts by oxidizing the DsbA protein. This is Disulfide bond formation protein B from Xanthomonas euvesicatoria pv. vesicatoria (strain 85-10) (Xanthomonas campestris pv. vesicatoria).